Reading from the N-terminus, the 819-residue chain is Probable beta-glucosidase G (819 aa).

A signal peptide spans Met-1–Ala-20. N-linked (GlcNAc...) asparagine glycosylation is found at Asn-41, Asn-59, Asn-107, Asn-228, and Asn-277. Asp-305 is a catalytic residue. Asn-337, Asn-344, Asn-351, Asn-403, Asn-500, Asn-509, Asn-554, Asn-567, Asn-588, Asn-627, Asn-683, and Asn-719 each carry an N-linked (GlcNAc...) asparagine glycan.

It belongs to the glycosyl hydrolase 3 family.

It localises to the secreted. The catalysed reaction is Hydrolysis of terminal, non-reducing beta-D-glucosyl residues with release of beta-D-glucose.. Its pathway is glycan metabolism; cellulose degradation. Functionally, beta-glucosidases are one of a number of cellulolytic enzymes involved in the degradation of cellulosic biomass. Catalyzes the last step releasing glucose from the inhibitory cellobiose. The chain is Probable beta-glucosidase G (bglG) from Emericella nidulans (strain FGSC A4 / ATCC 38163 / CBS 112.46 / NRRL 194 / M139) (Aspergillus nidulans).